We begin with the raw amino-acid sequence, 285 residues long: Tryptophan synthase alpha chain (285 aa).

Catalysis depends on proton acceptor residues glutamate 53 and aspartate 64.

It belongs to the TrpA family. In terms of assembly, tetramer of two alpha and two beta chains.

The enzyme catalyses (1S,2R)-1-C-(indol-3-yl)glycerol 3-phosphate + L-serine = D-glyceraldehyde 3-phosphate + L-tryptophan + H2O. The protein operates within amino-acid biosynthesis; L-tryptophan biosynthesis; L-tryptophan from chorismate: step 5/5. Functionally, the alpha subunit is responsible for the aldol cleavage of indoleglycerol phosphate to indole and glyceraldehyde 3-phosphate. The polypeptide is Tryptophan synthase alpha chain (Bordetella bronchiseptica (strain ATCC BAA-588 / NCTC 13252 / RB50) (Alcaligenes bronchisepticus)).